A 523-amino-acid chain; its full sequence is Fidgetin-like protein 1 (523 aa).

Residues 114–154 (PVQQAVKSRPEGQFPESRNNSTKKIDAQQYSSESSSQSGFG) form a disordered region. Over residues 141–151 (QQYSSESSSQS) the composition is skewed to low complexity. ATP-binding positions include Ala253 and 293 to 298 (GTGKTL).

It belongs to the AAA ATPase family. Hexamer. The cofactor is Mg(2+).

The catalysed reaction is ATP + H2O = ADP + phosphate + H(+). The protein is Fidgetin-like protein 1 of Drosophila melanogaster (Fruit fly).